Consider the following 899-residue polypeptide: Translation initiation factor IF-2 (899 aa).

Disordered regions lie at residues 116 to 135, 170 to 189, and 262 to 306; these read AKAR…ARLQ, RGGG…EQKK, and DREI…ANKH. The region spanning 399–568 is the tr-type G domain; it reads TRPPVVTIMG…LIQSELMELK (170 aa). A G1 region spans residues 408–415; sequence GHVDHGKT. 408-415 serves as a coordination point for GTP; sequence GHVDHGKT. Positions 433-437 are G2; that stretch reads GITQH. The G3 stretch occupies residues 454-457; the sequence is DTPG. Residues 454 to 458 and 508 to 511 each bind GTP; these read DTPGH and NKMD. The tract at residues 508-511 is G4; that stretch reads NKMD. A G5 region spans residues 544–546; that stretch reads SAH.

The protein belongs to the TRAFAC class translation factor GTPase superfamily. Classic translation factor GTPase family. IF-2 subfamily.

The protein resides in the cytoplasm. One of the essential components for the initiation of protein synthesis. Protects formylmethionyl-tRNA from spontaneous hydrolysis and promotes its binding to the 30S ribosomal subunits. Also involved in the hydrolysis of GTP during the formation of the 70S ribosomal complex. In Acinetobacter baumannii (strain AB307-0294), this protein is Translation initiation factor IF-2.